The following is a 1890-amino-acid chain: Callose synthase 9 (1890 aa).

Residues 1–489 (MSRAESSWER…EHRTFLHLYH (489 aa)) are Cytoplasmic-facing. A helical transmembrane segment spans residues 490–510 (SFHRLWIFLAMMFQALAIIAF). The Extracellular segment spans residues 511–523 (NKDDLTSRKTLLQ). The chain crosses the membrane as a helical span at residues 524–544 (ILSLGPTFVVMKFSESVLEVI). The Cytoplasmic segment spans residues 545–560 (MMYGAYSTTRRLAVSR). A helical membrane pass occupies residues 561-581 (IFLRFIWFGLASVFISFLYVK). The Extracellular segment spans residues 582 to 591 (SLKAPNSDSP). The helical transmembrane segment at 592–612 (IVQLYLIVIAIYGGVQFFFSI) threads the bilayer. Topologically, residues 613–658 (LMRIPTCHNIANKCDRWPVIRFFKWMRQERHYVGRGMYERTSDFIK) are cytoplasmic. The chain crosses the membrane as a helical span at residues 659–679 (YLLFWLVVLSAKFSFAYFLQI). The Extracellular portion of the chain corresponds to 680–722 (KPLVGPTRMIVKQNNIPYSWHDFVSRKNYNALTVASLWAPVVA). A helical transmembrane segment spans residues 723–743 (IYLLDIHIFYTIFSAFLGFLL). Residues 744–1457 (GARDRLGEIR…QLLDFFRMMS (714 aa)) are Cytoplasmic-facing. A helical transmembrane segment spans residues 1458-1478 (FFFTTVGFYLCTMLTVLTVYI). Residues 1479–1512 (FLYGRAYLALSGVGATIRERAILLDDTALSAALN) are Extracellular-facing. Residues 1513–1533 (AQFLFQIGVFTAVPMVLGFIL) traverse the membrane as a helical segment. The Cytoplasmic segment spans residues 1534–1539 (EQGFLQ). Residues 1540–1560 (AIVSFITMQFQLCTVFFTFSL) traverse the membrane as a helical segment. At 1561-1609 (GTRTHYFGRTILHGGARYQATGRGFVVKHIKFSENYRLYSRSHFVKAME) the chain is on the extracellular side. The next 2 membrane-spanning stretches (helical) occupy residues 1610-1630 (VILL…AVSY) and 1631-1651 (ILLT…PYLF). Over 1652–1703 (NPAGFEWQKVVEDFKEWTNWLFYRGGIGVKGAESWEAWWEEELSHIRTLSGR) the chain is Extracellular. The helical transmembrane segment at 1704–1724 (IMETILSLRFFIFQYGIVYKL) threads the bilayer. Residues 1725–1732 (KLQGSDTS) are Cytoplasmic-facing. A helical membrane pass occupies residues 1733 to 1753 (FAVYGWSWVAFAMIIVLFKVF). Residues 1754–1768 (TFSQKISVNFQLLLR) lie on the Extracellular side of the membrane. The helical transmembrane segment at 1769 to 1789 (FIQGLSLLMALAGIIVAVVLT) threads the bilayer. The Cytoplasmic segment spans residues 1790 to 1795 (PLSVTD). The chain crosses the membrane as a helical span at residues 1796-1816 (IFACVLAFIPTGWGILSIACA). Residues 1817-1838 (WKPVLKRMGMWKSIRSLARLYD) lie on the Extracellular side of the membrane. Residues 1839–1859 (ALMGMLIFLPVALCSWFPFVS) form a helical membrane-spanning segment. Topologically, residues 1860 to 1890 (TFQTRMMFNQAFSRGLEISLILAGDNPNSGL) are cytoplasmic.

Belongs to the glycosyltransferase 48 family.

The protein localises to the cell membrane. It carries out the reaction [(1-&gt;3)-beta-D-glucosyl](n) + UDP-alpha-D-glucose = [(1-&gt;3)-beta-D-glucosyl](n+1) + UDP + H(+). Involved in sporophytic and gametophytic development. Required for normal plant development. During pollen formation, required for the entry of microspores into mitosis and microspore symmetric division. May be required for correct temporal and spatial control of callose deposition during pollen mitosis. During plant growth and development, callose is found as a transitory component of the cell plate in dividing cells, is a major component of pollen mother cell walls and pollen tubes, and is found as a structural component of plasmodesmatal canals. The sequence is that of Callose synthase 9 (CALS9) from Arabidopsis thaliana (Mouse-ear cress).